We begin with the raw amino-acid sequence, 82 residues long: Large ribosomal subunit protein bL27 (82 aa).

The segment at 1-20 is disordered; sequence MATKKAGGSSSNGRDSIGKR.

Belongs to the bacterial ribosomal protein bL27 family.

The protein is Large ribosomal subunit protein bL27 of Neorickettsia sennetsu (strain ATCC VR-367 / Miyayama) (Ehrlichia sennetsu).